The chain runs to 259 residues: Protein odd-skipped-related 1 (259 aa).

3 C2H2-type zinc fingers span residues 168 to 190 (FVCK…ERTH), 196 to 218 (YTCD…RYIH), and 224 to 246 (FKCQ…KTLH).

It belongs to the Odd C2H2-type zinc-finger protein family.

The protein localises to the nucleus. Functionally, transcriptional repressor. Required for pronephric kidney development. The sequence is that of Protein odd-skipped-related 1 from Xenopus tropicalis (Western clawed frog).